A 412-amino-acid polypeptide reads, in one-letter code: Argininosuccinate synthase (412 aa).

ATP-binding positions include 16–24 and Ala-44; that span reads AYSGGLDTS. Tyr-96 and Ser-101 together coordinate L-citrulline. Residue Gly-126 participates in ATP binding. The L-aspartate site is built by Thr-128, Asn-132, and Asp-133. Asn-132 contributes to the L-citrulline binding site. Arg-136, Ser-185, Ser-194, Glu-270, and Tyr-282 together coordinate L-citrulline.

The protein belongs to the argininosuccinate synthase family. Type 1 subfamily. In terms of assembly, homotetramer.

Its subcellular location is the cytoplasm. It carries out the reaction L-citrulline + L-aspartate + ATP = 2-(N(omega)-L-arginino)succinate + AMP + diphosphate + H(+). Its pathway is amino-acid biosynthesis; L-arginine biosynthesis; L-arginine from L-ornithine and carbamoyl phosphate: step 2/3. The protein is Argininosuccinate synthase of Shewanella baltica (strain OS185).